The primary structure comprises 332 residues: Malate dehydrogenase (332 aa).

NAD(+)-binding positions include 11-16 (GAGNVG) and aspartate 35. Substrate contacts are provided by arginine 97 and arginine 103. NAD(+)-binding positions include asparagine 110 and 133–135 (VTN). The substrate site is built by asparagine 135 and arginine 166. Residue histidine 190 is the Proton acceptor of the active site.

It belongs to the LDH/MDH superfamily. MDH type 3 family.

The catalysed reaction is (S)-malate + NAD(+) = oxaloacetate + NADH + H(+). Functionally, catalyzes the reversible oxidation of malate to oxaloacetate. The polypeptide is Malate dehydrogenase (Hydrogenobaculum sp. (strain Y04AAS1)).